Here is a 445-residue protein sequence, read N- to C-terminus: rRNA methyltransferase 3B, mitochondrial (445 aa).

The transit peptide at Met-1–Ala-37 directs the protein to the mitochondrion. Disordered stretches follow at residues Glu-52 to Val-90 and His-311 to Gly-334. Polar residues-rich tracts occupy residues Val-54–Thr-70, Ile-78–Val-90, and His-311–Pro-324. S-adenosyl-L-methionine is bound by residues Gly-387, Ile-411, and Leu-420.

It belongs to the class IV-like SAM-binding methyltransferase superfamily. RNA methyltransferase TrmH family.

The protein localises to the mitochondrion. It carries out the reaction a uridine in rRNA + S-adenosyl-L-methionine = a 2'-O-methyluridine in rRNA + S-adenosyl-L-homocysteine + H(+). Its function is as follows. S-adenosyl-L-methionine-dependent 2'-O-ribose methyltransferase that catalyzes the formation of 2'-O-methylguanosine at position 1485 (Gm1485) in the mitochondrial large subunit ribosomal RNA (mtLSU rRNA), a conserved modification in the peptidyl transferase domain of the mtLSU rRNA. Also required for formation of 2'-O-methyluridine at position 1484 (Um1484) mediated by MRM2. This Danio rerio (Zebrafish) protein is rRNA methyltransferase 3B, mitochondrial.